A 282-amino-acid chain; its full sequence is Transcription factor BC1 (282 aa).

A disordered region spans residues 34–123 (TTAPAIPEDA…ATDSHSLAER (90 aa)). The segment covering 45-55 (METSSVVLDTS) has biased composition (polar residues). A compositionally biased stretch (basic and acidic residues) spans 75–84 (HSKEAKENGR). The Nuclear localization signal signature appears at 109 to 116 (ARRGQATD). Residues 113 to 126 (QATDSHSLAERVRR) form a basic motif; degenerate region. In terms of domain architecture, bHLH spans 113–163 (QATDSHSLAERVRRERISERMRMLQALVPGCDKVTGKALILDEIINYVQSL). The interval 127-163 (ERISERMRMLQALVPGCDKVTGKALILDEIINYVQSL) is helix-loop-helix motif. The disordered stretch occupies residues 219–251 (PAQSHAIMDTSNTSPTPYTLQVQGGSNNNSLSQ).

The protein belongs to the bHLH protein family. Homodimer. Component of a nuclear cell elongation controlling complex made of ILI5/BUL1, LO9-177 and BC1. Interacts with ILI5/BUL1 only in the presence of LO9-177. Interacts with IBH1. Binds to LO9-177 in the nucleus. Interacts with BCL1. As to expression, preferentially present in anthers and leaves lamina joints. Expressed in seedlings, leaves sheaths, collars and panicles.

It localises to the nucleus. Functionally, transcription activator that contributes, together with LO9-177 and ILI5/BUL1, to the promotion of leaf inclination and grain size by modulating cell elongation. Involved in the RLI1-dependent modulation of leaf inclination by promoting lamina joint cell elongation, especially in response to phosphate (Pi) availability. This chain is Transcription factor BC1, found in Oryza sativa subsp. japonica (Rice).